Here is a 234-residue protein sequence, read N- to C-terminus: Cytochrome b (234 aa).

Transmembrane regions (helical) follow at residues Phe33–Met53, Trp77–Val98, Trp113–Leu133, and Phe178–Leu198. The heme b site is built by His83 and His97. Heme b-binding residues include His182 and His196. Residue His201 coordinates a ubiquinone. Residues Ile226–Met234 traverse the membrane as a helical segment.

It belongs to the cytochrome b family. In terms of assembly, the cytochrome bc1 complex contains 11 subunits: 3 respiratory subunits (MT-CYB, CYC1 and UQCRFS1), 2 core proteins (UQCRC1 and UQCRC2) and 6 low-molecular weight proteins (UQCRH/QCR6, UQCRB/QCR7, UQCRQ/QCR8, UQCR10/QCR9, UQCR11/QCR10 and a cleavage product of UQCRFS1). This cytochrome bc1 complex then forms a dimer. It depends on heme b as a cofactor.

The protein resides in the mitochondrion inner membrane. In terms of biological role, component of the ubiquinol-cytochrome c reductase complex (complex III or cytochrome b-c1 complex) that is part of the mitochondrial respiratory chain. The b-c1 complex mediates electron transfer from ubiquinol to cytochrome c. Contributes to the generation of a proton gradient across the mitochondrial membrane that is then used for ATP synthesis. The sequence is that of Cytochrome b (MT-CYB) from Lepus alleni (Antelope jackrabbit).